The primary structure comprises 427 residues: MPRIVSVKAREVLDSRGEPTVEVEVELEDGTVGRAMVPSGASTGTYEALELRDGDDRYGGKGVRRAVRNVEEIIAPEIEGLDATAQPDIDRTMIELDGTENKSHLGANAILGVSLAVARAAAKSLGIPLYRYLGGPTARRLPVPFMNVINGGEHAGNELDFQEHMIVPHGFESFSEALRAGVETYHVLGELLEEEYGPIATNVGDEGGYAPPMKDTVEPLDVLVEAIEEAGYAPGKEIALALDAAASEFYDEDSGTYRAYGQKYTRDELIDVYKDLVSQYPIVSIEDPLHEEDFRGFAKITEELGDKVQIVGDDLFVTNPDRLRKGIEMGAANALLLKVNQIGTLTEAVEAGELALQHGYGVMVSHRSGDTEDPFIADLAVALGCGQIKTGAPARSSRTAKYNRLLRIEEDLAGAAEFGPRNDFFLP.

Gln162 contributes to the (2R)-2-phosphoglycerate binding site. Residue Glu206 is the Proton donor of the active site. Positions 243, 286, and 313 each coordinate Mg(2+). Positions 338, 367, 368, and 389 each coordinate (2R)-2-phosphoglycerate. The active-site Proton acceptor is Lys338.

The protein belongs to the enolase family. Requires Mg(2+) as cofactor.

The protein resides in the cytoplasm. Its subcellular location is the secreted. It localises to the cell surface. The enzyme catalyses (2R)-2-phosphoglycerate = phosphoenolpyruvate + H2O. The protein operates within carbohydrate degradation; glycolysis; pyruvate from D-glyceraldehyde 3-phosphate: step 4/5. In terms of biological role, catalyzes the reversible conversion of 2-phosphoglycerate (2-PG) into phosphoenolpyruvate (PEP). It is essential for the degradation of carbohydrates via glycolysis. This chain is Enolase, found in Methanopyrus kandleri (strain AV19 / DSM 6324 / JCM 9639 / NBRC 100938).